Consider the following 261-residue polypeptide: uncharacterized protein (261 aa).

A disordered region spans residues 1–22 (MAETTEPPSDAGTSQADAMALA). Residues 107-127 (IAMAAAVVIICGFTGLSGYIV) form a helical membrane-spanning segment.

The protein to M.tuberculosis Rv1362c.

Its subcellular location is the membrane. This is an uncharacterized protein from Mycobacterium tuberculosis (strain ATCC 25618 / H37Rv).